A 221-amino-acid polypeptide reads, in one-letter code: Nucleolar protein 3 (221 aa).

Residue glycine 2 is the site of N-myristoyl glycine attachment. The CARD domain maps to 4–95; sequence MQERPSETID…MPDPAWDWQH (92 aa). The essential for interaction with BAX stretch occupies residues 20-70; the sequence is VETLQADSGLLLDALVARGVLTGPEYEALDALPDAERRVRRLLLLVQSKGE. The interval 107–221 is disordered; that stretch reads PPCPGHWTPE…GDESEGCENT (115 aa). Over residues 132-143 the composition is skewed to acidic residues; the sequence is EEEEIGGPEDSE. Position 149 is a phosphothreonine; by CK2 (threonine 149). Composition is skewed to acidic residues over residues 165–201 and 209–221; these read PDLE…EPEP and FQEG…CENT.

In terms of assembly, oligomerizes (via CARD doamin). Interacts (via CARD domain) with CASP2; inhibits CASP2 activity in a phosphorylation-dependent manner. Interacts with CASP8; decreases CASP8 activity in a mitochondria localization- and phosphorylation-dependent manner and this interaction is dissociated by calcium. Interacts with TFPT; translocates NOL3 into the nucleus and negatively regulated TFPT-induced cell death. Interacts directly (via CARD domain) with FAS and FADD (via DED domain); inhibits death-inducing signaling complex (DISC) assembly by inhibiting the increase in FAS-FADD binding induced by FAS activation. Interacts (via CARD domain) with BAX (via a C-terminal 33 residues); inhibits BAX activation and translocation and consequently cytochrome c release from mitochondria. Interacts with PPM1G; may dephosphorylate NOL3. Interacts (via CARD domain) with BBC3 (via BH3 domain); preventing the association of BBC3 with BCL2 and resulting in activation of CASP8. Interacts (via CARD domain) with BAD(via BH3 domain); preventing the association of BAD with BCL2. Interacts directly (via CARD domain) with TNFRSF1A; inhibits TNF-signaling pathway. In terms of processing, phosphorylation at Thr-149 is required for its antiapoptotic effect by blocking death-inducing signaling complex (DISC) activity through the control of interaction with CASP8. Phosphorylation at Thr-149 results in translocation to mitochondria and this translocation enables the binding to CASP8. Dephosphorylated at Thr-149 by calcineurin; doesn't inhibit the association between FADD and CASP8 and the consequent apoptosis. Post-translationally, polyubiquitinated by MDM2; promoting proteasomal-dependent degradation in response to apoptotic stimuli. As to expression, highly expressed in skeletal muscle, heart and medulla.

It is found in the cytoplasm. The protein localises to the mitochondrion. The protein resides in the sarcoplasmic reticulum. Its subcellular location is the membrane. Its function is as follows. Apoptosis repressor that blocks multiple modes of cell death. Inhibits extrinsic apoptotic pathways through two different ways. Firstly by interacting with FAS and FADD upon FAS activation blocking death-inducing signaling complex (DISC) assembly. Secondly by interacting with CASP8 in a mitochondria localization- and phosphorylation-dependent manner, limiting the amount of soluble CASP8 available for DISC-mediated activation. Inhibits intrinsic apoptotic pathway in response to a wide range of stresses, through its interaction with BAX resulting in BAX inactivation, preventing mitochondrial dysfunction and release of pro-apoptotic factors. Inhibits calcium-mediated cell death by functioning as a cytosolic calcium buffer, dissociating its interaction with CASP8 and maintaining calcium homeostasis. Negatively regulates oxidative stress-induced apoptosis by phosphorylation-dependent suppression of the mitochondria-mediated intrinsic pathway, by blocking CASP2 activation and BAX translocation. Negatively regulates hypoxia-induced apoptosis in part by inhibiting the release of cytochrome c from mitochondria in a caspase-independent manner. Also inhibits TNF-induced necrosis by preventing TNF-signaling pathway through TNFRSF1A interaction abrogating the recruitment of RIPK1 to complex I. Finally through its role as apoptosis repressor, promotes vascular remodeling through inhibition of apoptosis and stimulation of proliferation, in response to hypoxia. Inhibits too myoblast differentiation through caspase inhibition. The sequence is that of Nucleolar protein 3 (Nol3) from Rattus norvegicus (Rat).